We begin with the raw amino-acid sequence, 450 residues long: Asparagine--tRNA ligase (450 aa).

This sequence belongs to the class-II aminoacyl-tRNA synthetase family. Homodimer.

Its subcellular location is the cytoplasm. It carries out the reaction tRNA(Asn) + L-asparagine + ATP = L-asparaginyl-tRNA(Asn) + AMP + diphosphate + H(+). This Metamycoplasma arthritidis (strain 158L3-1) (Mycoplasma arthritidis) protein is Asparagine--tRNA ligase.